The chain runs to 101 residues: NAD(P)H-quinone oxidoreductase subunit 4L, chloroplastic (101 aa).

3 helical membrane-spanning segments follow: residues 2–22, 32–52, and 61–81; these read MLEHILVLSAYLFSIGIYGLI, MCLELIFNSVNINFVTFSGFF, and IFSVFVFAIAAAEAAIGLAIV.

This sequence belongs to the complex I subunit 4L family. NDH is composed of at least 16 different subunits, 5 of which are encoded in the nucleus.

It localises to the plastid. The protein localises to the chloroplast thylakoid membrane. The enzyme catalyses a plastoquinone + NADH + (n+1) H(+)(in) = a plastoquinol + NAD(+) + n H(+)(out). The catalysed reaction is a plastoquinone + NADPH + (n+1) H(+)(in) = a plastoquinol + NADP(+) + n H(+)(out). NDH shuttles electrons from NAD(P)H:plastoquinone, via FMN and iron-sulfur (Fe-S) centers, to quinones in the photosynthetic chain and possibly in a chloroplast respiratory chain. The immediate electron acceptor for the enzyme in this species is believed to be plastoquinone. Couples the redox reaction to proton translocation, and thus conserves the redox energy in a proton gradient. The chain is NAD(P)H-quinone oxidoreductase subunit 4L, chloroplastic from Jasminum nudiflorum (Winter jasmine).